Reading from the N-terminus, the 325-residue chain is Phage-like element PBSX protein XkdQ (325 aa).

The protein to B.subtilis YqbQ.

The protein is Phage-like element PBSX protein XkdQ (xkdQ) of Bacillus subtilis (strain 168).